The following is a 391-amino-acid chain: Small ribosomal subunit protein mS29 (391 aa).

The transit peptide at 1–17 directs the protein to the mitochondrion; that stretch reads MLTGITRLFSRVQKLDP. Residues 30–59 are disordered; that stretch reads NSQVPAERPRTVSRTSDSDPAKHGEQHEGQ. The span at 45–59 shows a compositional bias: basic and acidic residues; that stretch reads SDSDPAKHGEQHEGQ. Lys168 and Lys200 each carry N6-acetyllysine.

This sequence belongs to the mitochondrion-specific ribosomal protein mS29 family. In terms of assembly, component of the mitochondrial ribosome small subunit (28S) which comprises a 12S rRNA and about 30 distinct proteins. Interacts with DELE1. Interacts with NOA1.

Its subcellular location is the mitochondrion. It carries out the reaction GTP + H2O = GDP + phosphate + H(+). Functionally, as a component of the mitochondrial small ribosomal subunit, it plays a role in the translation of mitochondrial mRNAs. Involved in mediating interferon-gamma-induced cell death. Displays GTPase activity in vitro. This chain is Small ribosomal subunit protein mS29, found in Mus musculus (Mouse).